The following is a 112-amino-acid chain: Cell cycle protein GpsB (112 aa).

A coiled-coil region spans residues 32–75 (LDDIIKDYETYISTIEELRQENTRLKEEVKQAKKRQEAAQTTVS).

Belongs to the GpsB family. In terms of assembly, forms polymers through the coiled coil domains. Interacts with PBP1, MreC and EzrA.

The protein localises to the cytoplasm. In terms of biological role, divisome component that associates with the complex late in its assembly, after the Z-ring is formed, and is dependent on DivIC and PBP2B for its recruitment to the divisome. Together with EzrA, is a key component of the system that regulates PBP1 localization during cell cycle progression. Its main role could be the removal of PBP1 from the cell pole after pole maturation is completed. Also contributes to the recruitment of PBP1 to the division complex. Not essential for septum formation. In Streptococcus mutans serotype c (strain ATCC 700610 / UA159), this protein is Cell cycle protein GpsB.